The primary structure comprises 581 residues: Leucine aminopeptidase 3, chloroplastic (581 aa).

The N-terminal 50 residues, M1–Y50, are a transit peptide targeting the chloroplast. Mn(2+) contacts are provided by K350 and D355. The active site involves K362. The Mn(2+) site is built by D375, D435, and E437. The active site involves R439.

Belongs to the peptidase M17 family. Homohexamer (dimer of homotrimers). Mn(2+) serves as cofactor.

Its subcellular location is the plastid. It is found in the chloroplast. The enzyme catalyses Release of an N-terminal amino acid, Xaa-|-Yaa-, in which Xaa is preferably Leu, but may be other amino acids including Pro although not Arg or Lys, and Yaa may be Pro. Amino acid amides and methyl esters are also readily hydrolyzed, but rates on arylamides are exceedingly low.. The catalysed reaction is Release of N-terminal proline from a peptide.. Functionally, presumably involved in the processing and regular turnover of intracellular proteins. Catalyzes the removal of unsubstituted N-terminal amino acids from various peptides. Possesses Cys-Gly dipeptidase activity. This chain is Leucine aminopeptidase 3, chloroplastic, found in Arabidopsis thaliana (Mouse-ear cress).